The sequence spans 75 residues: Small ribosomal subunit protein bS18 (75 aa).

Belongs to the bacterial ribosomal protein bS18 family. As to quaternary structure, part of the 30S ribosomal subunit. Forms a tight heterodimer with protein bS6.

Functionally, binds as a heterodimer with protein bS6 to the central domain of the 16S rRNA, where it helps stabilize the platform of the 30S subunit. The sequence is that of Small ribosomal subunit protein bS18 from Ruegeria sp. (strain TM1040) (Silicibacter sp.).